Here is a 447-residue protein sequence, read N- to C-terminus: ATP-dependent protease ATPase subunit HslU (447 aa).

Residues isoleucine 17, 59 to 64, aspartate 256, glutamate 321, and arginine 393 contribute to the ATP site; that span reads GVGKTE.

This sequence belongs to the ClpX chaperone family. HslU subfamily. As to quaternary structure, a double ring-shaped homohexamer of HslV is capped on each side by a ring-shaped HslU homohexamer. The assembly of the HslU/HslV complex is dependent on binding of ATP.

Its subcellular location is the cytoplasm. ATPase subunit of a proteasome-like degradation complex; this subunit has chaperone activity. The binding of ATP and its subsequent hydrolysis by HslU are essential for unfolding of protein substrates subsequently hydrolyzed by HslV. HslU recognizes the N-terminal part of its protein substrates and unfolds these before they are guided to HslV for hydrolysis. The polypeptide is ATP-dependent protease ATPase subunit HslU (Pseudomonas entomophila (strain L48)).